The primary structure comprises 449 residues: Lipase (449 aa).

Positions 1–23 (MGVFDYKNLGTEASKTLFADATA) are cleaved as a signal peptide. The tract at residues 58-77 (RQHRLPGSDPPAFPGILTRK) is disordered. Residue Ser206 is the Charge relay system of the active site. 3 residues coordinate Ca(2+): Gly318, Asp387, and Asp396. Hemolysin-type calcium-binding repeat units lie at residues 372-389 (IGSD…ADFI) and 390-407 (EGGK…HNTF).

The protein belongs to the AB hydrolase superfamily. Lipase family.

It catalyses the reaction a triacylglycerol + H2O = a diacylglycerol + a fatty acid + H(+). The polypeptide is Lipase (Pseudomonas fluorescens).